Reading from the N-terminus, the 198-residue chain is MRLAVFGGSFDPPHNGHLALCLYARELLQVDRLVISASNNPLKDAPQAADRDRVKMAELLAETINRTGAFAEVSSWEANRGHPVYTIDLMEYLEEIYSTSDLTLLIGEDNFLNFRQWKSWEELIRRYSIIVFGRKADDGASDDSAISERLHDQSFRHIDLNLPLSSTEIRKRLASGDDCSAEIPSPIWQYIVENQLYQ.

It belongs to the NadD family.

The catalysed reaction is nicotinate beta-D-ribonucleotide + ATP + H(+) = deamido-NAD(+) + diphosphate. Its pathway is cofactor biosynthesis; NAD(+) biosynthesis; deamido-NAD(+) from nicotinate D-ribonucleotide: step 1/1. Functionally, catalyzes the reversible adenylation of nicotinate mononucleotide (NaMN) to nicotinic acid adenine dinucleotide (NaAD). The protein is Probable nicotinate-nucleotide adenylyltransferase of Chlorobium phaeobacteroides (strain BS1).